Here is a 332-residue protein sequence, read N- to C-terminus: UDP-3-O-acylglucosamine N-acyltransferase (332 aa).

The active-site Proton acceptor is His231.

It belongs to the transferase hexapeptide repeat family. LpxD subfamily. In terms of assembly, homotrimer.

The catalysed reaction is a UDP-3-O-[(3R)-3-hydroxyacyl]-alpha-D-glucosamine + a (3R)-hydroxyacyl-[ACP] = a UDP-2-N,3-O-bis[(3R)-3-hydroxyacyl]-alpha-D-glucosamine + holo-[ACP] + H(+). The protein operates within bacterial outer membrane biogenesis; LPS lipid A biosynthesis. Catalyzes the N-acylation of UDP-3-O-acylglucosamine using 3-hydroxyacyl-ACP as the acyl donor. Is involved in the biosynthesis of lipid A, a phosphorylated glycolipid that anchors the lipopolysaccharide to the outer membrane of the cell. This Ruthia magnifica subsp. Calyptogena magnifica protein is UDP-3-O-acylglucosamine N-acyltransferase.